The following is a 192-amino-acid chain: Interferon epsilon (192 aa).

The signal sequence occupies residues 1–21 (MVHRQLPETVLLLLVSSTIFS). Cys-52 and Cys-162 are oxidised to a cystine.

This sequence belongs to the alpha/beta interferon family. Expressed at very high levels in uterus and, at much lower levels, in ovary and cervix. Very low levels, if any, in other organs. In the endometrium, expressed in the luminal and glandular epithelial cells (at protein level).

It is found in the secreted. Functionally, type I interferon required for maintaining basal levels of IFN-regulated genes, including 2'-5'-oligoadenylate synthetase, IRF7 and ISG15, in the female reproductive tract. Directly mediates protection against viral, including HSV-2, and bacterial, including Chlamydia muridarum, genital infections. This is Interferon epsilon (Ifne) from Mus musculus (Mouse).